Here is a 309-residue protein sequence, read N- to C-terminus: Homoserine kinase (309 aa).

91–101 contributes to the ATP binding site; it reads PIGSGLGSSAC.

It belongs to the GHMP kinase family. Homoserine kinase subfamily.

The protein localises to the cytoplasm. It catalyses the reaction L-homoserine + ATP = O-phospho-L-homoserine + ADP + H(+). It functions in the pathway amino-acid biosynthesis; L-threonine biosynthesis; L-threonine from L-aspartate: step 4/5. Catalyzes the ATP-dependent phosphorylation of L-homoserine to L-homoserine phosphate. The sequence is that of Homoserine kinase from Edwardsiella ictaluri (strain 93-146).